The sequence spans 512 residues: 23S rRNA (uracil(1939)-C(5))-methyltransferase RlmD (512 aa).

A compositionally biased stretch (low complexity) spans 1–14 (MQPTDSKTSTSDTT). The interval 1 to 45 (MQPTDSKTSTSDTTEQPNETQTITIPPSKKKSKPSSKTRRRLKDA) is disordered. Positions 15–25 (EQPNETQTITI) are enriched in polar residues. Over residues 28–42 (SKKKSKPSSKTRRRL) the composition is skewed to basic residues. Residues 41 to 113 (RLKDAEPLPF…TSFEEGDAVN (73 aa)) form the TRAM domain. Residues cysteine 127, cysteine 133, cysteine 136, and cysteine 215 each contribute to the [4Fe-4S] cluster site. Glutamine 340, phenylalanine 369, asparagine 374, glutamate 393, aspartate 420, and aspartate 441 together coordinate S-adenosyl-L-methionine. Cysteine 467 functions as the Nucleophile in the catalytic mechanism.

Belongs to the class I-like SAM-binding methyltransferase superfamily. RNA M5U methyltransferase family. RlmD subfamily.

The enzyme catalyses uridine(1939) in 23S rRNA + S-adenosyl-L-methionine = 5-methyluridine(1939) in 23S rRNA + S-adenosyl-L-homocysteine + H(+). In terms of biological role, catalyzes the formation of 5-methyl-uridine at position 1939 (m5U1939) in 23S rRNA. This chain is 23S rRNA (uracil(1939)-C(5))-methyltransferase RlmD, found in Psychrobacter arcticus (strain DSM 17307 / VKM B-2377 / 273-4).